The primary structure comprises 612 residues: uncharacterized protein (612 aa).

Transmembrane regions (helical) follow at residues 13 to 33 (IPLTLAVIVFALVMFVLEWLP), 38 to 58 (AILVAVILMVLGLVTPTEGIA), 67 to 87 (TIMAMFILSYGITRTGIIQII), 107 to 127 (GFIVGPSSAFLNNTAIVAIFL), 144 to 164 (LLIPLSYATILGGMITLLGTS), and 189 to 209 (LGLLTFSVGLIYIVLAAPILL). RCK C-terminal domains follow at residues 218-302 (GNVA…ERGI) and 316-403 (NNAG…LLVL). 6 consecutive transmembrane segments (helical) span residues 419-439 (AIAIVALVIVIAGLDILPISV), 459-479 (IYGAIRWDVIFLLAGLIPLGT), 501-521 (LSGYALLLLFYLATALLTEIL), 525-545 (ATVVLMLPIAFQVAQSLGLNP), 546-566 (LAFMFVVTFAASNSFMSPIGY), and 586-606 (IGAPLTVILTLATPLLVMLIY).

The protein belongs to the SLC13A/DASS transporter (TC 2.A.47) family. NADC subfamily.

The protein resides in the cell membrane. This is an uncharacterized protein from Synechocystis sp. (strain ATCC 27184 / PCC 6803 / Kazusa).